Here is an 89-residue protein sequence, read N- to C-terminus: Submaxillary mucin (89 aa).

The interval 1 to 89 is disordered; the sequence is AGSVGRTAGG…VGGSPVATTL (89 aa). Ser3 carries an O-linked (GalNAc...) serine; partial glycan. Thr7 and Thr14 each carry an O-linked (GalNAc...) threonine; partial glycan. A glycan (O-linked (GalNAc...) serine; partial) is linked at Ser15. O-linked (GalNAc...) threonine; partial glycosylation occurs at Thr23. An O-linked (GalNAc...) serine; partial glycan is attached at Ser25. O-linked (GalNAc...) threonine; partial glycosylation occurs at Thr27. The O-linked (GalNAc...) serine; partial glycan is linked to Ser29. Thr34 carries O-linked (GalNAc...) threonine; partial glycosylation. O-linked (GalNAc...) serine; partial glycosylation occurs at Ser38. Thr42 carries O-linked (GalNAc...) threonine; partial glycosylation. 2 O-linked (GalNAc...) serine; partial glycosylation sites follow: Ser47 and Ser49. Thr50 carries O-linked (GalNAc...) threonine; partial glycosylation. Ser54 carries O-linked (GalNAc...) serine; partial glycosylation. A compositionally biased stretch (low complexity) spans 56–71; sequence APGTTLAGRAGTTLGP. Thr59, Thr60, Thr67, and Thr68 each carry an O-linked (GalNAc...) threonine; partial glycan. Ser73 and Ser76 each carry an O-linked (GalNAc...) serine; partial glycan. Thr78 is a glycosylation site (O-linked (GalNAc...) threonine; partial). The O-linked (GalNAc...) serine; partial glycan is linked to Ser83.

Post-translationally, heavily O-glycosylated at most but not all Ser and Thr residues. Expressed in the submaxillary salivary gland.

The protein resides in the secreted. This Canis lupus familiaris (Dog) protein is Submaxillary mucin.